Consider the following 387-residue polypeptide: Formate-dependent phosphoribosylglycinamide formyltransferase (387 aa).

N(1)-(5-phospho-beta-D-ribosyl)glycinamide contacts are provided by residues Glu-15–Leu-16 and Glu-75. ATP-binding positions include Arg-106, Lys-147, Ser-152–Gln-157, Glu-187–Ile-190, and Glu-195. The region spanning Asp-111 to Leu-301 is the ATP-grasp domain. Residues Glu-260 and Glu-272 each contribute to the Mg(2+) site. N(1)-(5-phospho-beta-D-ribosyl)glycinamide is bound by residues Asp-279, Lys-349, and Arg-356–Arg-357.

It belongs to the PurK/PurT family. Homodimer.

It carries out the reaction N(1)-(5-phospho-beta-D-ribosyl)glycinamide + formate + ATP = N(2)-formyl-N(1)-(5-phospho-beta-D-ribosyl)glycinamide + ADP + phosphate + H(+). It functions in the pathway purine metabolism; IMP biosynthesis via de novo pathway; N(2)-formyl-N(1)-(5-phospho-D-ribosyl)glycinamide from N(1)-(5-phospho-D-ribosyl)glycinamide (formate route): step 1/1. Its function is as follows. Involved in the de novo purine biosynthesis. Catalyzes the transfer of formate to 5-phospho-ribosyl-glycinamide (GAR), producing 5-phospho-ribosyl-N-formylglycinamide (FGAR). Formate is provided by PurU via hydrolysis of 10-formyl-tetrahydrofolate. The sequence is that of Formate-dependent phosphoribosylglycinamide formyltransferase from Prochlorococcus marinus (strain NATL2A).